Here is a 621-residue protein sequence, read N- to C-terminus: Alpha-actinin-like protein 1 (621 aa).

Calponin-homology (CH) domains are found at residues 8–114 and 123–230; these read SVQN…LRFT and LTAK…HAFS. The tract at residues 86–110 is actin-binding; that stretch reads LTNIGPADIVDGNLKLILGLIWTLI. EF-hand domains are found at residues 388–419, 487–549, and 550–618; these read LSTISNEITNLQGDWRDQLDHVEFLQEHLGPL, DGIT…EIVM, and EELE…AEDK.

The protein belongs to the alpha-actinin family.

It is found in the cytoplasm. The protein resides in the cytoskeleton. Its function is as follows. Binds to actin and is involved in actin-ring formation and organization. Plays a role in cytokinesis and is involved in septation. The chain is Alpha-actinin-like protein 1 (ain1) from Schizosaccharomyces pombe (strain 972 / ATCC 24843) (Fission yeast).